The chain runs to 406 residues: Alpha-1-antitrypsin (406 aa).

An N-terminal signal peptide occupies residues 1 to 24 (MTSSISWGLLLLAGLCCLVPSFLA). The residue at position 33 (Ser-33) is a Phosphoserine. N-linked (GlcNAc...) asparagine glycosylation is found at Asn-59, Asn-96, and Asn-260. The interval 362–381 (GTTVLEAVPMSIPPDVCFKN) is RCL. Residue Ser-372 is modified to Phosphoserine.

This sequence belongs to the serpin family. Interacts with CELA2A. Interacts with ERGIC3 and LMAN1/ERGIC53. Interacts with PRSS1/Trypsin. Plasma.

The protein resides in the secreted. In terms of biological role, inhibitor of serine proteases. Can inhibit elastase, trypsin, chymotrypsin and plasmin. The polypeptide is Alpha-1-antitrypsin (Meriones unguiculatus (Mongolian jird)).